A 160-amino-acid polypeptide reads, in one-letter code: Epithelial membrane protein 1 (160 aa).

Residues 1–21 (MLVLLAGLFVVHIATAIMLFV) traverse the membrane as a helical segment. The N-linked (GlcNAc...) asparagine glycan is linked to Asn43. The next 3 membrane-spanning stretches (helical) occupy residues 67 to 87 (FMIL…FQLF), 95 to 115 (FFLS…GVSI), and 137 to 157 (FILT…YMVL).

The protein belongs to the PMP-22/EMP/MP20 family. In terms of tissue distribution, most prominently found in the gastrointestinal tract, skin, lung, and brain but not in liver.

It is found in the membrane. The chain is Epithelial membrane protein 1 (Emp1) from Rattus norvegicus (Rat).